The following is a 191-amino-acid chain: Gamma-glutamylaminecyclotransferase B (191 aa).

Substrate is bound at residue 7-10 (YGTL). The active-site Proton acceptor is the glutamate 82. A compositionally biased stretch (polar residues) spans 155–178 (SADFSQNSEQEIKKNNSLQILTST). A disordered region spans residues 155 to 191 (SADFSQNSEQEIKKNNSLQILTSTGDDHDVNFRGPLQ).

This sequence belongs to the gamma-glutamylcyclotransferase family.

The catalysed reaction is epsilon-(gamma-L-glutamyl)-L-lysine = 5-oxo-L-proline + L-lysine. In terms of biological role, may contribute to degradation of proteins cross-linked by transglutaminases by degrading the cross-link between a lysine and a glutamic acid residue. Catalyzes the formation of 5-oxo-L-proline from L-gamma-glutamyl-L-epsilon-lysine. The sequence is that of Gamma-glutamylaminecyclotransferase B (ggact.2) from Danio rerio (Zebrafish).